The primary structure comprises 432 residues: Cyclin-A2 (432 aa).

Met1 is modified (N-acetylmethionine). At Ser5 the chain carries Phosphoserine. Disordered regions lie at residues 26-45 (LQEDQENINPEKAAPVQQPR) and 55-75 (SGNPRGLAQQQRPKTRRVAPL). Ser55 carries the post-translational modification Phosphoserine.

It belongs to the cyclin family. Cyclin AB subfamily. Interacts with the CDK1 and CDK2 protein kinases to form serine/threonine kinase holoenzyme complexes. Interacts with CDK1 (hyperphosphorylated form in G1 and underphosphorylated forms in S and G2). Interacts with CDK2; the interaction increases from G1 to G2. Interacts (associated with CDK2 but not with CDK1) with SCAPER; regulates the activity of CCNA2/CDK2 by transiently maintaining CCNA2 in the cytoplasm. Forms a ternary complex with CDK2 and CDKN1B; CDKN1B inhibits the kinase activity of CDK2 through conformational rearrangements. Interacts with INCA1. In terms of assembly, (Microbial infection) Interacts with human cytomegalovirus protein UL32. Polyubiquitinated via 'Lys-11'-linked ubiquitin by the anaphase-promoting complex (APC/C), leading to its degradation by the proteasome. Deubiquitinated and stabilized by USP37 enables entry into S phase. Ubiquitinated during the G1 phase by the SCF(FBXO31) complex, leading to its proteasomal degradation.

The protein resides in the nucleus. It localises to the cytoplasm. Cyclin which controls both the G1/S and the G2/M transition phases of the cell cycle. Functions through the formation of specific serine/threonine protein kinase holoenzyme complexes with the cyclin-dependent protein kinases CDK1 or CDK2. The cyclin subunit confers the substrate specificity of these complexes and differentially interacts with and activates CDK1 and CDK2 throughout the cell cycle. This chain is Cyclin-A2, found in Homo sapiens (Human).